The following is a 440-amino-acid chain: 5-hydroxytryptamine receptor 6 (440 aa).

Residues 1-27 (MVPEPGPTANSTPAWGAGPPSAPGGSG) are Extracellular-facing. A helical transmembrane segment spans residues 28–52 (WVAAALCVVIALTAAANSLLIALIC). At 53 to 62 (TQPALRNTSN) the chain is on the cytoplasmic side. A helical membrane pass occupies residues 63–88 (FFLVSLFTSDLMVGLVVMPPAMLNAL). The Extracellular segment spans residues 89 to 96 (YGRWVLAR). The helical transmembrane segment at 97–122 (GLCLLWTAFDVMCCSASILNLCLISL) threads the bilayer. A disulfide bridge links Cys99 with Cys180. Residue Asp106 coordinates serotonin. Topologically, residues 123–142 (DRYLLILSPLRYKLRMTPLR) are cytoplasmic. Residues 143–167 (ALALVLGAWSLAALASFLPLLLGWH) form a helical membrane-spanning segment. The Extracellular portion of the chain corresponds to 168–185 (ELGHARPPVPGQCRLLAS). The chain crosses the membrane as a helical span at residues 186-209 (LPFVLVASGLTFFLPSGAICFTYC). Residues 210–266 (RILLAARKQAVQVASLTTGMASQASETLQVPRTPRPGVESADSRRLATKHSRKALKA) lie on the Cytoplasmic side of the membrane. Residues 267–293 (SLTLGILLGMFFVTWLPFFVANIVQAV) traverse the membrane as a helical segment. Asn288 contributes to the serotonin binding site. Residues 294-299 (CDCISP) are Extracellular-facing. Residues 300–323 (GLFDVLTWLGYCNSTMNPIIYPLF) form a helical membrane-spanning segment. Residues 324 to 440 (MRDFKRALGR…RPHPLGIPTN (117 aa)) are Cytoplasmic-facing. Residues 346 to 392 (ASLASPSLRTSHSGPRPGLSLQQVLPLPLPPDSDSDSDAGSGGSSGL) form a disordered region. Over residues 347–358 (SLASPSLRTSHS) the composition is skewed to polar residues. Low complexity predominate over residues 362-371 (PGLSLQQVLP).

This sequence belongs to the G-protein coupled receptor 1 family. In terms of assembly, interacts with MTOR, RPTOR and NF1. Interacts with CDK5. In terms of tissue distribution, expressed in several human brain regions, most prominently in the caudate nucleus.

It is found in the cell membrane. G-protein coupled receptor for 5-hydroxytryptamine (serotonin), a biogenic hormone that functions as a neurotransmitter, a hormone and a mitogen. Also has a high affinity for tricyclic psychotropic drugs. Ligand binding causes a conformation change that triggers signaling via guanine nucleotide-binding proteins (G proteins) and modulates the activity of downstream effectors. HTR6 is coupled to G(s) G alpha proteins and mediates activation of adenylate cyclase activity. Controls pyramidal neurons migration during corticogenesis, through the regulation of CDK5 activity. Is an activator of mTOR signaling. The polypeptide is 5-hydroxytryptamine receptor 6 (Homo sapiens (Human)).